The following is a 429-amino-acid chain: Saccharopine dehydrogenase-like oxidoreductase (429 aa).

Position 2 is an N-acetylalanine (alanine 2). A Phosphoserine modification is found at serine 217.

Belongs to the saccharopine dehydrogenase family.

This is Saccharopine dehydrogenase-like oxidoreductase (SCCPDH) from Bos taurus (Bovine).